Consider the following 541-residue polypeptide: Carotenoid-cleaving dioxygenase, mitochondrial (541 aa).

Residues H188, H248, H319, and H535 each contribute to the Fe cation site.

The protein belongs to the carotenoid oxygenase family. It depends on Fe(2+) as a cofactor. Widely expressed. Detected in heart, spleen, lung, intestine, colon, stomach, kidney, bladder, and prostate. Highly expressed in liver and testis (at protein level).

Its subcellular location is the mitochondrion. It carries out the reaction all-trans-beta-carotene + O2 = beta-ionone + all-trans-10'-apo-beta-carotenal. The enzyme catalyses 5-cis-lycopene + O2 = 5-cis-10'-apo-lycopenal + (3E,5E)-6,10-dimethylundeca-3,5,9-trien-2-one. It catalyses the reaction 13-cis-lycopene + O2 = 13-cis-10'-apo-lycopenal + (3E,5E)-6,10-dimethylundeca-3,5,9-trien-2-one. The catalysed reaction is lutein + O2 = (3R,6R)-hydroxy-alpha-ionone + (3R)-3-hydroxy-10'-apo-beta-carotenal. It carries out the reaction lutein + O2 = (3R,6R)-3-hydroxy-10'-apo-alpha-carotenal + (3R)-hydroxy-beta-ionone. The enzyme catalyses all-trans-zeaxanthin + 2 O2 = 4,9-dimethyldodeca-2,4,6,8,10-pentaenedial + 2 (3R)-hydroxy-beta-ionone. It catalyses the reaction all-trans-zeaxanthin + O2 = (3R)-3-hydroxy-10'-apo-beta-carotenal + (3R)-hydroxy-beta-ionone. The catalysed reaction is beta-cryptoxanthin + O2 = all-trans-10'-apo-beta-carotenal + (3R)-hydroxy-beta-ionone. It carries out the reaction all-trans-10'-apo-beta-carotenal + O2 = beta-ionone + 4,9-dimethyldodeca-2,4,6,8,10-pentaenedial. The enzyme catalyses (3R)-3-hydroxy-10'-apo-beta-carotenal + O2 = 4,9-dimethyldodeca-2,4,6,8,10-pentaenedial + (3R)-hydroxy-beta-ionone. It catalyses the reaction (3R,6R)-3-hydroxy-10'-apo-alpha-carotenal + O2 = (3R,6R)-hydroxy-alpha-ionone + 4,9-dimethyldodeca-2,4,6,8,10-pentaenedial. Its function is as follows. Broad specificity mitochondrial dioxygenase that mediates the asymmetric oxidative cleavage of carotenoids. Cleaves carotenes (pure hydrocarbon carotenoids) such as all-trans-beta-carotene and lycopene as well as xanthophylls (oxygenated carotenoids) such as zeaxanthin, lutein and beta-cryptoxanthin at both the 9,10 and the 9',10' carbon-carbon double bond. Through its function in carotenoids metabolism regulates oxidative stress and the production of important signaling molecules. This is Carotenoid-cleaving dioxygenase, mitochondrial from Mustela putorius furo (European domestic ferret).